Here is a 103-residue protein sequence, read N- to C-terminus: Conantokin R1-A (103 aa).

An N-terminal signal peptide occupies residues 1–21 (MQLYTYLYLLVPLVTFHLILG). Residues 22–79 (TGTLDHGGALTERRSTDATALKPEPVLQKSAARSTDDNGKDRLTQMKRILKKRGNNPR) constitute a propeptide that is removed on maturation. The disordered stretch occupies residues 34–83 (RRSTDATALKPEPVLQKSAARSTDDNGKDRLTQMKRILKKRGNNPRADEE). The span at 55–65 (STDDNGKDRLT) shows a compositional bias: basic and acidic residues. Residues Glu-82, Glu-83, and Glu-89 each carry the 4-carboxyglutamate modification.

The protein belongs to the conotoxin B superfamily. The cofactor is Ca(2+). It depends on Mg(2+) as a cofactor. Expressed by the venom duct.

The protein localises to the secreted. Functionally, conantokins inhibit N-methyl-D-aspartate (NMDA) receptors. This toxin has the highest potency for the NR2B/GRIN2B subunit (IC(50)=0.11 uM), followed by NR2D/GRIN2D (IC(50)=0.48 uM), NR2A/GRIN2A (IC(50)=2.1 uM), and NR2C/GRIN2C (IC(50)=6.1 uM) subunits when tested on rat receptors. The chain is Conantokin R1-A from Conus rolani (Cone snail).